The chain runs to 437 residues: Epsilon-sarcoglycan (437 aa).

The Extracellular segment spans residues M1–F317. An N-linked (GlcNAc...) asparagine glycan is attached at N200. A helical membrane pass occupies residues L318–I338. Over M339 to P437 the chain is Cytoplasmic.

This sequence belongs to the sarcoglycan alpha/epsilon family. In terms of processing, N-glycosylated. Ubiquitinated, leading to its degradation by the proteasome.

Its subcellular location is the cell membrane. It is found in the sarcolemma. The protein resides in the cytoplasm. It localises to the cytoskeleton. The protein localises to the cell projection. Its subcellular location is the dendrite. It is found in the golgi apparatus. In terms of biological role, component of the sarcoglycan complex, a subcomplex of the dystrophin-glycoprotein complex which forms a link between the F-actin cytoskeleton and the extracellular matrix. The chain is Epsilon-sarcoglycan from Pongo abelii (Sumatran orangutan).